The sequence spans 360 residues: Outer mitochondrial transmembrane helix translocase (360 aa).

At 1 to 15 (MVHGEAFSRPLSRNE) the chain is on the mitochondrial intermembrane side. The chain crosses the membrane as a helical span at residues 16–34 (VVGLIFRLTIFGAVTYFTI). The Cytoplasmic portion of the chain corresponds to 35-360 (KWMVDAIDPT…QNVLMHVSLD (326 aa)). 133–140 (GPPGCGKT) is an ATP binding site.

It belongs to the AAA ATPase family. MSP1 subfamily.

It localises to the mitochondrion outer membrane. Its subcellular location is the peroxisome membrane. The protein resides in the postsynaptic cell membrane. It carries out the reaction [protein]-with a C-terminal TM segment(out) + ATP + H2O = [protein]-with a C-terminal TM segment(in) + ADP + phosphate + H(+). In terms of biological role, outer mitochondrial translocase required to remove mislocalized tail-anchored transmembrane proteins on mitochondria. Specifically recognizes and binds tail-anchored transmembrane proteins: acts as a dislocase that mediates the ATP-dependent extraction of mistargeted tail-anchored transmembrane proteins from the mitochondrion outer membrane. Also plays a critical role in regulating the surface expression of AMPA receptors (AMPAR), thereby regulating synaptic plasticity and learning and memory. The protein is Outer mitochondrial transmembrane helix translocase of Xenopus tropicalis (Western clawed frog).